A 262-amino-acid polypeptide reads, in one-letter code: Probable carboxylesterase Culp3 (262 aa).

The first 41 residues, 1 to 41 (MNNRPIRLLTSGRAGLGAGALITAVVLLIALGAVWTLVAFA), serve as a signal peptide directing secretion. A disulfide bridge links Cys-44 with Cys-114. The active-site Nucleophile is Ser-125. An intrachain disulfide couples Cys-188 to Cys-195. Asp-192 is an active-site residue. His-206 (proton donor/acceptor) is an active-site residue. The disordered stretch occupies residues 241–262 (LPGSVLQMPGTAAPAPESLHGR).

It belongs to the cutinase family.

Its subcellular location is the secreted. This Mycobacterium tuberculosis (strain CDC 1551 / Oshkosh) protein is Probable carboxylesterase Culp3 (cut3).